The sequence spans 276 residues: Formamidopyrimidine-DNA glycosylase (276 aa).

The active-site Schiff-base intermediate with DNA is the Pro2. The active-site Proton donor is the Glu3. Lys59 (proton donor; for beta-elimination activity) is an active-site residue. Residues His93, Arg112, and Arg155 each contribute to the DNA site. The FPG-type zinc finger occupies 240 to 274 (QVYNREGKPCPRCGDKIAKKKVGGRSSYYCPTCQK). Arg264 (proton donor; for delta-elimination activity) is an active-site residue.

This sequence belongs to the FPG family. In terms of assembly, monomer. The cofactor is Zn(2+).

The catalysed reaction is Hydrolysis of DNA containing ring-opened 7-methylguanine residues, releasing 2,6-diamino-4-hydroxy-5-(N-methyl)formamidopyrimidine.. It carries out the reaction 2'-deoxyribonucleotide-(2'-deoxyribose 5'-phosphate)-2'-deoxyribonucleotide-DNA = a 3'-end 2'-deoxyribonucleotide-(2,3-dehydro-2,3-deoxyribose 5'-phosphate)-DNA + a 5'-end 5'-phospho-2'-deoxyribonucleoside-DNA + H(+). In terms of biological role, involved in base excision repair of DNA damaged by oxidation or by mutagenic agents. Acts as a DNA glycosylase that recognizes and removes damaged bases. Has a preference for oxidized purines, such as 7,8-dihydro-8-oxoguanine (8-oxoG). Has AP (apurinic/apyrimidinic) lyase activity and introduces nicks in the DNA strand. Cleaves the DNA backbone by beta-delta elimination to generate a single-strand break at the site of the removed base with both 3'- and 5'-phosphates. The sequence is that of Formamidopyrimidine-DNA glycosylase from Pelotomaculum thermopropionicum (strain DSM 13744 / JCM 10971 / SI).